Reading from the N-terminus, the 207-residue chain is Large ribosomal subunit protein bL25 (207 aa).

The protein belongs to the bacterial ribosomal protein bL25 family. CTC subfamily. In terms of assembly, part of the 50S ribosomal subunit; part of the 5S rRNA/L5/L18/L25 subcomplex. Contacts the 5S rRNA. Binds to the 5S rRNA independently of L5 and L18.

In terms of biological role, this is one of the proteins that binds to the 5S RNA in the ribosome where it forms part of the central protuberance. This Rhizorhabdus wittichii (strain DSM 6014 / CCUG 31198 / JCM 15750 / NBRC 105917 / EY 4224 / RW1) (Sphingomonas wittichii) protein is Large ribosomal subunit protein bL25.